A 156-amino-acid chain; its full sequence is Acyl carrier protein, mitochondrial (156 aa).

Residues 1 to 68 (MASRVLSAYV…GRVTQLCRQY (68 aa)) constitute a mitochondrion transit peptide. The Carrier domain maps to 77–152 (EGIQDRVLYV…EIVDYIADKK (76 aa)). K88 bears the N6-acetyllysine mark. S112 is modified (O-(pantetheine 4'-phosphoryl)serine).

It belongs to the acyl carrier protein (ACP) family. In terms of assembly, mammalian complex I is composed of 45 different subunits. Interacts with ETFRF1. Identified in a complex composed of MALSU1, MIEF1 upstream open reading frame protein and NDUFAB1; within the trimeric complex, MIEF1 upstream open reading frame protein functions as a bridging scaffold that interacts with MALSU1 on one side, and with NDUFAB1 on the other side. The complex interacts with the mitochondrial large ribosomal subunit. Interacts with alpha-1-microglobulin chain; this interaction is required for the maintenance of mitochondrial redox homeostasis. Component of the mitochondrial core iron-sulfur cluster (ISC) complex composed of NFS1, LYRM4, NDUFAB1, ISCU, FXN, and FDX2; this complex is a heterohexamer containing two copies of each monomer. Component of the cyteine desulfurase complex composed of NFS1, LYRM4 and NDUFAB1; this complex contributes to the stability and cysteine desulfurase activity of NFS1. Post-translationally, phosphopantetheinylation at Ser-112 is essential for interactions with LYR motif-containing proteins.

It localises to the mitochondrion. Functionally, carrier of the growing fatty acid chain in fatty acid biosynthesis. Accessory and non-catalytic subunit of the mitochondrial membrane respiratory chain NADH dehydrogenase (Complex I), which functions in the transfer of electrons from NADH to the respiratory chain. Accessory protein, of the core iron-sulfur cluster (ISC) assembly complex, that regulates, in association with LYRM4, the stability and the cysteine desulfurase activity of NFS1 and participates in the [2Fe-2S] clusters assembly on the scaffolding protein ISCU. The core iron-sulfur cluster (ISC) assembly complex is involved in the de novo synthesis of a [2Fe-2S] cluster, the first step of the mitochondrial iron-sulfur protein biogenesis. This process is initiated by the cysteine desulfurase complex (NFS1:LYRM4:NDUFAB1) that produces persulfide which is delivered on the scaffold protein ISCU in a FXN-dependent manner. Then this complex is stabilized by FDX2 which provides reducing equivalents to accomplish the [2Fe-2S] cluster assembly. Finally, the [2Fe-2S] cluster is transferred from ISCU to chaperone proteins, including HSCB, HSPA9 and GLRX5. The chain is Acyl carrier protein, mitochondrial from Gorilla gorilla gorilla (Western lowland gorilla).